Reading from the N-terminus, the 560-residue chain is Dihydroxy-acid dehydratase (560 aa).

Cys-52 contacts [2Fe-2S] cluster. Residue Asp-84 participates in Mg(2+) binding. Residue Cys-125 participates in [2Fe-2S] cluster binding. Asp-126 and Lys-127 together coordinate Mg(2+). At Lys-127 the chain carries N6-carboxylysine. Cys-197 is a [2Fe-2S] cluster binding site. Glu-449 contacts Mg(2+). Catalysis depends on Ser-475, which acts as the Proton acceptor.

The protein belongs to the IlvD/Edd family. As to quaternary structure, homodimer. [2Fe-2S] cluster is required as a cofactor. Mg(2+) serves as cofactor.

It catalyses the reaction (2R)-2,3-dihydroxy-3-methylbutanoate = 3-methyl-2-oxobutanoate + H2O. The catalysed reaction is (2R,3R)-2,3-dihydroxy-3-methylpentanoate = (S)-3-methyl-2-oxopentanoate + H2O. It participates in amino-acid biosynthesis; L-isoleucine biosynthesis; L-isoleucine from 2-oxobutanoate: step 3/4. It functions in the pathway amino-acid biosynthesis; L-valine biosynthesis; L-valine from pyruvate: step 3/4. In terms of biological role, functions in the biosynthesis of branched-chain amino acids. Catalyzes the dehydration of (2R,3R)-2,3-dihydroxy-3-methylpentanoate (2,3-dihydroxy-3-methylvalerate) into 2-oxo-3-methylpentanoate (2-oxo-3-methylvalerate) and of (2R)-2,3-dihydroxy-3-methylbutanoate (2,3-dihydroxyisovalerate) into 2-oxo-3-methylbutanoate (2-oxoisovalerate), the penultimate precursor to L-isoleucine and L-valine, respectively. The protein is Dihydroxy-acid dehydratase of Sulfurisphaera tokodaii (strain DSM 16993 / JCM 10545 / NBRC 100140 / 7) (Sulfolobus tokodaii).